Here is a 276-residue protein sequence, read N- to C-terminus: MDAGDASRLGESLDAVSAAFQSRVMELQELVLARNMYPATAIPDLAAVDVSLTAMEAQLQAVRRRLQEEREAFPKAKKLVQQSLKQQRRLQLMLANMPTGMREDVFATPLEHNSSMMFPESLNFSSAVPEVRDHDLKIKEEPTAPPKKGRGPAPRWYISTEELDSLSSYMRGRLTLEKVNIAINEVASYADGNAHLVACPKKKLSEDTWEKALVLRDIAARESVKGKHFFLETDIKGPGLKLDTTGKAILTVLRHLGRFQETRIGHHRVFILSKQQ.

Positions 48–78 (VDVSLTAMEAQLQAVRRRLQEEREAFPKAKK) form a coiled coil.

The protein belongs to the SKA1 family.

This is SKA complex subunit 1 homolog from Oryza sativa subsp. indica (Rice).